Reading from the N-terminus, the 289-residue chain is MDRVLSLGKLPISFLKTLYLFSKSDIPAATLPSMAVALVLAAPCSFHLIIKGFLWNQLHLLTFQVKNQIDGIDEDSIAKPHRPLPSGRITPGQATLLYRVLFFLMWVAAVYTNTISCTLVYSIAIVVYNEGGLAAIPVVKNLIGAIGLGCYCWGTTIIFDGGKELHGLKAVAVLMIVGIFATTGHAQDFRDRTADATRGRKTIPLLLSQPVARWSLATITAAWTIGLIALWKPPAIVTLAYVAASLRCLDGFLSSYDEKDDYVSYCWYGFWLLGSNILPIFPRLRGELP.

Transmembrane regions (helical) follow at residues 35 to 55, 95 to 115, 142 to 162, 165 to 185, 222 to 242, and 262 to 282; these read AVAL…GFLW, TLLY…TNTI, LIGA…FDGG, LHGL…TTGH, AWTI…LAYV, and YVSY…PIFP.

Belongs to the paxB family.

The protein resides in the membrane. The catalysed reaction is (2E,6E)-farnesyl diphosphate = (+)-exo-beta-bergamotene + diphosphate. It participates in secondary metabolite biosynthesis; terpenoid biosynthesis. Its function is as follows. Beta-trans-bergamotene synthase; part of the gene cluster that mediates the biosynthesis of fumagillin, a meroterpenoid that has numerous biological activities including irreversible inhibition of human type 2 methionine aminopeptidase (METAP2). Within the pathway, the membrane-bound fumagillin beta-trans-bergamotene synthase af520 converts farnesyl pyrophosphate (FPP) to beta-trans-bergamotene. The pathway begins with the conversion of FPP to beta-trans-bergamotene by af520. The multifunctional cytochrome P450 monooxygenase af510 then converts beta-trans-bergamotene into 5-keto-demethoxyfumagillol via several oxydation steps. 5-keto-demethoxyfumagillol is then subjected to successive C-6 hydroxylation and O-methylation by the dioxygenase af480 and O-methyltransferase af390-400, respectively, to yield 5-keto-fumagillol, which is then stereoselectively reduced by the keto-reductase af490 to 5R-hydroxy-seco-sesquiterpene. The next step is the polyketide transferase af380-catalyzed transfer of a dodecapentaenoyl group synthesized by the polyketide synthase af370 onto 5R-hydroxy-seco-sesquiterpene which leads to the production of prefumagillin. Finally, oxidative cleavage by the monooxygenase af470 converts prefumagillin to fumagillin. The polypeptide is Fumagillin beta-trans-bergamotene synthase af520 (Aspergillus fumigatus (strain ATCC MYA-4609 / CBS 101355 / FGSC A1100 / Af293) (Neosartorya fumigata)).